The chain runs to 301 residues: Peptidyl-prolyl isomerase CWC27 (301 aa).

In terms of domain architecture, PPIase cyclophilin-type spans 9–159 (TTAKCILYTT…YPAVLKDVEI (151 aa)). Positions 251–280 (TELHDNVDEATTKETESQENIKEEPMDKRE) are disordered.

This sequence belongs to the cyclophilin-type PPIase family. CWC27 subfamily. As to quaternary structure, belongs to the CWC complex (or CEF1-associated complex), a spliceosome subcomplex composed of the U2, U5 and U6 snRNAs and at least BUD13, BUD31, BRR2, CDC40, CEF1, CLF1, CUS1, CWC2, CWC15, CWC21, CWC22, CWC23, CWC24, CWC25, CWC27, ECM2, HSH155, IST3, ISY1, LEA1, MSL1, NTC20, PRP8, PRP9, PRP11, PRP19, PRP21, PRP22, PRP45, PRP46, SLU7, SMB1, SMD1, SMD2, SMD3, SMX2, SMX3, SNT309, SNU114, SPP2, SYF1, SYF2, RSE1 and YJU2.

The protein localises to the cytoplasm. The protein resides in the nucleus. It catalyses the reaction [protein]-peptidylproline (omega=180) = [protein]-peptidylproline (omega=0). In terms of biological role, PPIases accelerate the folding of proteins. Catalyzes the cis-trans isomerization of proline imidic peptide bonds in oligopeptides. Involved in pre-mRNA splicing. This is Peptidyl-prolyl isomerase CWC27 (CWC27) from Saccharomyces cerevisiae (strain ATCC 204508 / S288c) (Baker's yeast).